Here is a 521-residue protein sequence, read N- to C-terminus: Cytochrome P450 monooxygenase bet2 (521 aa).

The helical transmembrane segment at 23–43 (SNWRFALFVAATLLTSYIVIV) threads the bilayer. A glycan (N-linked (GlcNAc...) asparagine) is linked at asparagine 188. Cysteine 461 is a heme binding site.

The protein belongs to the cytochrome P450 family. Heme is required as a cofactor.

Its subcellular location is the membrane. It catalyses the reaction dehydroprobetaenone I + NADPH + O2 + H(+) = epoxybetaenone + NADP(+) + H2O. The catalysed reaction is dehydroprobetaenone I + 3 NADPH + 3 O2 + 3 H(+) = betaenone C + 3 NADP(+) + 3 H2O. The protein operates within mycotoxin biosynthesis. Functionally, cytochrome P450 monooxygenase; part of the gene cluster that mediates the biosynthesis of betaenones, phytotoxic polyketides involved in leaf spot disease in sugar beets. The first step of the pathway is the synthesis of dehydroprobetaenone I by the polyketide synthase bet1 and the enoyl reductase bet3 via condensation of one acetyl-CoA starter unit with 7 malonyl-CoA units and 5 methylations. The C-terminal reductase (R) domain of bet1 catalyzes the reductive release of the polyketide chain. Because bet1 lacks a designated enoylreductase (ER) domain, the required activity is provided the enoyl reductase bet3. The short-chain dehydrogenase/reductase bet4 then catalyzes reduction of dehydroprobetaenone I to probetaenone I. The cytochrome P450 monooxygenase bet2 catalyzes successive epoxidation, oxidation (resulting from epoxide opening) and hydroxylation to install a tertiary alcohol in the decaline ring to yield betaenone C from dehydroprobetaenone I and betaenone B from probetaenone I. The FAD-linked oxidoreductase (orf1) is probably responsible for the conversion of betaenone C to betaenone A via an intramolecular aldol reaction between C-1 and C-17 to form the bridged tricyclic system in betaenone A. This is Cytochrome P450 monooxygenase bet2 from Neocamarosporium betae (Beet black rot fungus).